A 2276-amino-acid chain; its full sequence is Poly [ADP-ribose] polymerase tankyrase (2276 aa).

2 stretches are compositionally biased toward basic residues: residues 1-15 (MARR…VKAA) and 87-98 (KAVKAPKVKAPS). Disordered regions lie at residues 1–20 (MARR…KIDG) and 79–103 (SSKT…KGND). 15 ANK repeats span residues 345–374 (KNIT…TINI), 378–407 (DNWY…SVTM), 411–440 (QTET…DLEK), 461–490 (SGNS…IVVD), 498–527 (NRLT…LVEG), 531–560 (KKRT…SLTL), 564–593 (SGNT…NILS), 598–627 (WQLY…KDKA), 675–725 (SGQT…KVDV), 729–758 (EDNT…NKRN), 970–999 (KDDV…EMHL), 1171–1200 (NGNT…HVDL), 1204–1233 (DGNT…DVTE), 1472–1501 (GLIP…SLKT), and 1505–1535 (YGRT…AVVL). The interval 1570–1649 (VPARVESDEE…STGPKRKKLV (80 aa)) is disordered. 2 stretches are compositionally biased toward acidic residues: residues 1576–1590 (SDEE…ESGE) and 1612–1622 (SDDEDDDDDDS). One copy of the ANK 16 repeat lies at 1662-1706 (KENNPLHYFIEPLAWENVELLGDLAAANKTAIVQCLIDKRSPNPI). One can recognise a WGR domain in the interval 1788–1889 (GLVSFCDETQ…ANFRDMPKKY (102 aa)). Residues 1910–2045 (KNTEKDPIRR…EIETATRLLC (136 aa)) enclose the PARP alpha-helical domain. Positions 2047–2276 (AEFRQDLDRV…VLPKYIVMYK (230 aa)) constitute a PARP catalytic domain.

As to expression, expressed throughout the head and tail, in germ cells and somatic cells.

The protein resides in the nucleus. The protein localises to the chromosome. The enzyme catalyses NAD(+) + (ADP-D-ribosyl)n-acceptor = nicotinamide + (ADP-D-ribosyl)n+1-acceptor + H(+).. The catalysed reaction is L-aspartyl-[protein] + NAD(+) = 4-O-(ADP-D-ribosyl)-L-aspartyl-[protein] + nicotinamide. It catalyses the reaction L-glutamyl-[protein] + NAD(+) = 5-O-(ADP-D-ribosyl)-L-glutamyl-[protein] + nicotinamide. Functionally, poly[ADP-ribose] polymerases modify various nuclear proteins by poly(ADP-ribosyl)ation, a post-translational modification synthesized after DNA damage that appears as an obligatory step in a detection/signaling pathway leading to the reparation of DNA strand breaks and programmed cell death. This Caenorhabditis elegans protein is Poly [ADP-ribose] polymerase tankyrase.